We begin with the raw amino-acid sequence, 184 residues long: UPF0397 protein SAR2767 (184 aa).

The next 5 membrane-spanning stretches (helical) occupy residues 11–31 (VVAI…VVIP), 44–64 (AFLA…TGLI), 77–97 (AWWS…WIGL), 117–137 (GQII…DILI), and 148–168 (QGVI…TILL).

It belongs to the UPF0397 family.

The protein resides in the cell membrane. In Staphylococcus aureus (strain MRSA252), this protein is UPF0397 protein SAR2767.